Here is a 199-residue protein sequence, read N- to C-terminus: dITP/XTP pyrophosphatase (199 aa).

12 to 17 is a binding site for substrate; it reads SGNAGK. The active-site Proton acceptor is the Asp73. Asp73 provides a ligand contact to Mg(2+). Residues Ser74, 157–160, Lys180, and 185–186 contribute to the substrate site; these read FGYD and HR.

Belongs to the HAM1 NTPase family. As to quaternary structure, homodimer. The cofactor is Mg(2+).

The enzyme catalyses XTP + H2O = XMP + diphosphate + H(+). The catalysed reaction is dITP + H2O = dIMP + diphosphate + H(+). It catalyses the reaction ITP + H2O = IMP + diphosphate + H(+). In terms of biological role, pyrophosphatase that catalyzes the hydrolysis of nucleoside triphosphates to their monophosphate derivatives, with a high preference for the non-canonical purine nucleotides XTP (xanthosine triphosphate), dITP (deoxyinosine triphosphate) and ITP. Seems to function as a house-cleaning enzyme that removes non-canonical purine nucleotides from the nucleotide pool, thus preventing their incorporation into DNA/RNA and avoiding chromosomal lesions. In Neisseria meningitidis serogroup B (strain ATCC BAA-335 / MC58), this protein is dITP/XTP pyrophosphatase.